Reading from the N-terminus, the 103-residue chain is Urease subunit beta (103 aa).

Belongs to the urease beta subunit family. Heterotrimer of UreA (gamma), UreB (beta) and UreC (alpha) subunits. Three heterotrimers associate to form the active enzyme.

It is found in the cytoplasm. It catalyses the reaction urea + 2 H2O + H(+) = hydrogencarbonate + 2 NH4(+). The protein operates within nitrogen metabolism; urea degradation; CO(2) and NH(3) from urea (urease route): step 1/1. The protein is Urease subunit beta of Streptomyces coelicolor (strain ATCC BAA-471 / A3(2) / M145).